A 395-amino-acid polypeptide reads, in one-letter code: S-adenosylmethionine synthase (395 aa).

His16 lines the ATP pocket. Asp18 is a Mg(2+) binding site. Glu44 provides a ligand contact to K(+). L-methionine contacts are provided by Glu57 and Gln100. The flexible loop stretch occupies residues 100–110 (QSPDIAQGVDR). ATP contacts are provided by residues 167-169 (DAK), 233-234 (RF), Asp242, 248-249 (RK), Ala265, and Lys269. Residue Asp242 participates in L-methionine binding. Lys273 serves as a coordination point for L-methionine.

Belongs to the AdoMet synthase family. As to quaternary structure, homotetramer; dimer of dimers. The cofactor is Mg(2+). K(+) serves as cofactor.

It is found in the cytoplasm. It carries out the reaction L-methionine + ATP + H2O = S-adenosyl-L-methionine + phosphate + diphosphate. Its pathway is amino-acid biosynthesis; S-adenosyl-L-methionine biosynthesis; S-adenosyl-L-methionine from L-methionine: step 1/1. Catalyzes the formation of S-adenosylmethionine (AdoMet) from methionine and ATP. The overall synthetic reaction is composed of two sequential steps, AdoMet formation and the subsequent tripolyphosphate hydrolysis which occurs prior to release of AdoMet from the enzyme. The polypeptide is S-adenosylmethionine synthase (Burkholderia cenocepacia (strain ATCC BAA-245 / DSM 16553 / LMG 16656 / NCTC 13227 / J2315 / CF5610) (Burkholderia cepacia (strain J2315))).